The chain runs to 131 residues: uncharacterized protein (131 aa).

The HTH hxlR-type domain occupies 26 to 124; that stretch reads CSVEVAVNEI…WGKMYGSHQE (99 aa).

This is an uncharacterized protein from Methanothermobacter thermautotrophicus (strain ATCC 29096 / DSM 1053 / JCM 10044 / NBRC 100330 / Delta H) (Methanobacterium thermoautotrophicum).